A 316-amino-acid polypeptide reads, in one-letter code: MAMETQMSQNVCPRNLWLLQPLTVLLLLASADSQAAPPKAVLKLEPPWINVLQEDSVTLTCRGARSPESDSIQWFHNGNLIPTHTQPSYRFKANNNDSGEYTCQTGQTSLSDPVHLTVLSEWLVLQTPHLEFQEGETIVLRCHSWKDKPLVKVTFFQNGKSQKFSHLDPNLSIPQANHSHSGDYHCTGNIGYTLFSSKPVTITVQAPSVGSSSPVGIIVAVVIATAVAAIVAAVVALIYCRKKRISANSTDPVKAAQFEPPGRQMIAIRKRQLEETNNDYETADGGYMTLNPRAPTDDDKNIYLTLPPNDHVNSNN.

The N-terminal stretch at 1 to 35 (MAMETQMSQNVCPRNLWLLQPLTVLLLLASADSQA) is a signal peptide. Residues 36–216 (APPKAVLKLE…PSVGSSSPVG (181 aa)) are Extracellular-facing. 2 consecutive Ig-like C2-type domains span residues 38 to 117 (PKAV…VHLT) and 121 to 203 (EWLV…VTIT). 2 cysteine pairs are disulfide-bonded: Cys61/Cys103 and Cys142/Cys186. N-linked (GlcNAc...) asparagine glycosylation is found at Asn96, Asn170, and Asn177. A helical transmembrane segment spans residues 217–239 (IIVAVVIATAVAAIVAAVVALIY). Over 240–316 (CRKKRISANS…PPNDHVNSNN (77 aa)) the chain is Cytoplasmic. A phosphotyrosine; by SRC-type Tyr-kinases mark is found at Tyr287 and Tyr303.

Interacts with INPP5D/SHIP1 and INPPL1/SHIP2, regulating its function. Interacts with APCS and FGR. Interacts with HCK. In terms of processing, phosphorylated by SRC-type Tyr-kinases such as HCK, LYN, BLK, FYN and SYK.

It is found in the cell membrane. Functionally, binds to the Fc region of immunoglobulins gamma. Low affinity receptor. By binding to IgG it initiates cellular responses against pathogens and soluble antigens. Promotes phagocytosis of opsonized antigens. This Pan troglodytes (Chimpanzee) protein is Low affinity immunoglobulin gamma Fc region receptor II-a (FCGR2A).